A 433-amino-acid polypeptide reads, in one-letter code: Serine hydroxymethyltransferase (433 aa).

Residues leucine 132 and 136 to 138 (GHL) each bind (6S)-5,6,7,8-tetrahydrofolate. Lysine 241 bears the N6-(pyridoxal phosphate)lysine mark.

The protein belongs to the SHMT family. Homodimer. It depends on pyridoxal 5'-phosphate as a cofactor.

Its subcellular location is the cytoplasm. It catalyses the reaction (6R)-5,10-methylene-5,6,7,8-tetrahydrofolate + glycine + H2O = (6S)-5,6,7,8-tetrahydrofolate + L-serine. Its pathway is one-carbon metabolism; tetrahydrofolate interconversion. It participates in amino-acid biosynthesis; glycine biosynthesis; glycine from L-serine: step 1/1. Functionally, catalyzes the reversible interconversion of serine and glycine with tetrahydrofolate (THF) serving as the one-carbon carrier. This reaction serves as the major source of one-carbon groups required for the biosynthesis of purines, thymidylate, methionine, and other important biomolecules. Also exhibits THF-independent aldolase activity toward beta-hydroxyamino acids, producing glycine and aldehydes, via a retro-aldol mechanism. The sequence is that of Serine hydroxymethyltransferase from Bradyrhizobium sp. (strain ORS 278).